The sequence spans 345 residues: Dihydroorotase (345 aa).

The Zn(2+) site is built by histidine 13 and histidine 15. Residues histidine 15–arginine 17 and asparagine 41 contribute to the substrate site. Positions 98, 135, and 173 each coordinate Zn(2+). Lysine 98 bears the N6-carboxylysine mark. Histidine 135 contacts substrate. Position 218 (leucine 218) interacts with substrate. Aspartate 246 is a Zn(2+) binding site. Residue aspartate 246 is part of the active site. Residues histidine 250 and alanine 262 each coordinate substrate.

It belongs to the metallo-dependent hydrolases superfamily. DHOase family. Class II DHOase subfamily. In terms of assembly, homodimer. Zn(2+) is required as a cofactor.

It catalyses the reaction (S)-dihydroorotate + H2O = N-carbamoyl-L-aspartate + H(+). The protein operates within pyrimidine metabolism; UMP biosynthesis via de novo pathway; (S)-dihydroorotate from bicarbonate: step 3/3. Catalyzes the reversible cyclization of carbamoyl aspartate to dihydroorotate. In Shewanella halifaxensis (strain HAW-EB4), this protein is Dihydroorotase.